Reading from the N-terminus, the 791-residue chain is Primase D5 (791 aa).

D174 is an active-site residue. Positions 346–471 (SDRGEYLVWL…ELMSILDDIQ (126 aa)) are primase. In terms of domain architecture, SF3 helicase spans 479 to 641 (ENRELYEQIL…FTNTKKKVHN (163 aa)). Residue 505-512 (GETATGKS) participates in ATP binding.

It belongs to the poxviridae D5 family. As to quaternary structure, interacts with A20.

Primase which may have roles in initiation of DNA replication or lagging-strand synthesis. The chain is Primase D5 from Fowlpox virus (strain NVSL) (FPV).